The chain runs to 149 residues: Large ribosomal subunit protein uL13 (149 aa).

This sequence belongs to the universal ribosomal protein uL13 family. As to quaternary structure, part of the 50S ribosomal subunit.

In terms of biological role, this protein is one of the early assembly proteins of the 50S ribosomal subunit, although it is not seen to bind rRNA by itself. It is important during the early stages of 50S assembly. The chain is Large ribosomal subunit protein uL13 from Borrelia recurrentis (strain A1).